Consider the following 287-residue polypeptide: Phosphatidylserine decarboxylase proenzyme (287 aa).

Residues D90, H147, and S252 each act as charge relay system; for autoendoproteolytic cleavage activity in the active site. The active-site Schiff-base intermediate with substrate; via pyruvic acid; for decarboxylase activity is S252. S252 is subject to Pyruvic acid (Ser); by autocatalysis.

Belongs to the phosphatidylserine decarboxylase family. PSD-B subfamily. Prokaryotic type I sub-subfamily. Heterodimer of a large membrane-associated beta subunit and a small pyruvoyl-containing alpha subunit. It depends on pyruvate as a cofactor. In terms of processing, is synthesized initially as an inactive proenzyme. Formation of the active enzyme involves a self-maturation process in which the active site pyruvoyl group is generated from an internal serine residue via an autocatalytic post-translational modification. Two non-identical subunits are generated from the proenzyme in this reaction, and the pyruvate is formed at the N-terminus of the alpha chain, which is derived from the carboxyl end of the proenzyme. The autoendoproteolytic cleavage occurs by a canonical serine protease mechanism, in which the side chain hydroxyl group of the serine supplies its oxygen atom to form the C-terminus of the beta chain, while the remainder of the serine residue undergoes an oxidative deamination to produce ammonia and the pyruvoyl prosthetic group on the alpha chain. During this reaction, the Ser that is part of the protease active site of the proenzyme becomes the pyruvoyl prosthetic group, which constitutes an essential element of the active site of the mature decarboxylase.

The protein resides in the cell membrane. The enzyme catalyses a 1,2-diacyl-sn-glycero-3-phospho-L-serine + H(+) = a 1,2-diacyl-sn-glycero-3-phosphoethanolamine + CO2. It functions in the pathway phospholipid metabolism; phosphatidylethanolamine biosynthesis; phosphatidylethanolamine from CDP-diacylglycerol: step 2/2. In terms of biological role, catalyzes the formation of phosphatidylethanolamine (PtdEtn) from phosphatidylserine (PtdSer). This Pseudomonas putida (strain ATCC 47054 / DSM 6125 / CFBP 8728 / NCIMB 11950 / KT2440) protein is Phosphatidylserine decarboxylase proenzyme.